We begin with the raw amino-acid sequence, 261 residues long: Short chain dehydrogenase/reductase astE (261 aa).

Positions 24, 70, 97, and 131 each coordinate NADP(+). Active-site proton donor residues include S150 and Y164. Positions 164, 168, 197, and 199 each coordinate NADP(+). K168 functions as the Lowers pKa of active site Tyr in the catalytic mechanism.

The protein belongs to the short-chain dehydrogenases/reductases (SDR) family.

It participates in secondary metabolite biosynthesis; terpenoid biosynthesis. Functionally, short chain dehydrogenase/reductase; part of the gene cluster that mediates the biosynthesis of astellolides, drimane-type sesquiterpene esters that show antimicrobial, anti-inflammatory, and anti-tumor activities. The first step in astellolide biosynthesis is performed by the sesquiterpene cyclase astC that catalyzes the formation of drimanyl pyrophosphate from farnesyl pyrophosphate. Drimanyl pyrophosphate is then dephosphorylated by the sesquiterpene phosphatase astI to produce drimanyl monophosphate which is further dephosphorylated to drim-8-ene-11-ol by atsK. Drim-8-ene-11-ol is converted to confertifolin, probably by the cytochrome P450 monooxygenase astD and/or the dehydrogenase astE. The cytochrome P450 monooxygenases astB, astF and astJ then hydroxylate confertifolin at C6, C14, or C15 to form trihydroxy confertifolin. The nonribosomal peptide synthetase astA catalyzes ester bond formation between trihydroxy contifolin and benzoic acid (BA) or 4-hydroxy benzoic acid (4HBA), leading to the formation of dideacetyl astellolides A and B, respectively. Finally, the O-acetyltransferase astG converts dideacetyl astellolides A and B into deacetyl astellolides A and B. The sequence is that of Short chain dehydrogenase/reductase astE from Aspergillus oryzae (strain ATCC 42149 / RIB 40) (Yellow koji mold).